A 746-amino-acid chain; its full sequence is NAD(P)H-quinone oxidoreductase subunit 5, chloroplastic (746 aa).

Transmembrane regions (helical) follow at residues 9 to 29, 40 to 60, 89 to 109, 125 to 145, 147 to 167, 185 to 205, 221 to 241, 258 to 278, 280 to 300, 327 to 347, 354 to 374, 396 to 416, 425 to 445, 547 to 567, 608 to 628, and 723 to 743; these read WIIP…LLLF, WTFL…YLSI, IDPL…LVLI, FAYM…SNLI, VYFF…FWFT, GDFG…SFEF, VNLL…IAKS, TPIS…FLVA, LLPI…IGII, LGYM…FHLI, ALLF…VGYS, TAFL…CFWS, FLFS…TAFY, ILFP…IGIP, FSVS…KPFY, and YLFL…FFYF.

This sequence belongs to the complex I subunit 5 family. NDH is composed of at least 16 different subunits, 5 of which are encoded in the nucleus.

The protein localises to the plastid. Its subcellular location is the chloroplast thylakoid membrane. The catalysed reaction is a plastoquinone + NADH + (n+1) H(+)(in) = a plastoquinol + NAD(+) + n H(+)(out). It catalyses the reaction a plastoquinone + NADPH + (n+1) H(+)(in) = a plastoquinol + NADP(+) + n H(+)(out). In terms of biological role, NDH shuttles electrons from NAD(P)H:plastoquinone, via FMN and iron-sulfur (Fe-S) centers, to quinones in the photosynthetic chain and possibly in a chloroplast respiratory chain. The immediate electron acceptor for the enzyme in this species is believed to be plastoquinone. Couples the redox reaction to proton translocation, and thus conserves the redox energy in a proton gradient. The protein is NAD(P)H-quinone oxidoreductase subunit 5, chloroplastic (ndhF) of Lobularia maritima (Sweet alyssum).